The primary structure comprises 244 residues: MNIDLNADLGEGCASDAALLQLVSSANIACGFHAGDAQTMLASVREALKNGVAIGAHPSFPDRENFGRTAMTLLPETVYAQTLYQIGALAAIARAEGGVMRHVKPHGMLYNQAAKDPQLADAIARAVHACDPSLILVGLAGSELIRAGEHYGLTTRQEVFADRGYQADGSLVPRTQPGALVEDEEHALAQTLGMVESGRVKSITGEWANVVAQTVCIHGDGEHALAFARRLRAAFEERSIRIMA.

This sequence belongs to the LamB/PxpA family. As to quaternary structure, forms a complex composed of PxpA, PxpB and PxpC.

The enzyme catalyses 5-oxo-L-proline + ATP + 2 H2O = L-glutamate + ADP + phosphate + H(+). Functionally, catalyzes the cleavage of 5-oxoproline to form L-glutamate coupled to the hydrolysis of ATP to ADP and inorganic phosphate. This is 5-oxoprolinase subunit A from Citrobacter koseri (strain ATCC BAA-895 / CDC 4225-83 / SGSC4696).